We begin with the raw amino-acid sequence, 439 residues long: Acyl-coenzyme A thioesterase 9, mitochondrial (439 aa).

Residues 1–21 constitute a mitochondrion transit peptide; sequence MKRAAIRLWTLNKGLLTHGRG. HotDog ACOT-type domains follow at residues 85–209 and 289–401; these read SYIE…RDSE and EDTK…EKEV. Residue Lys102 is modified to N6-acetyllysine.

This sequence belongs to the acyl coenzyme A hydrolase family. As to quaternary structure, interacts with NYAP1, NYAP2 and MYO16. Widely expressed.

The protein resides in the mitochondrion. It localises to the mitochondrion matrix. The protein localises to the mitochondrion inner membrane. The enzyme catalyses butanoyl-CoA + H2O = butanoate + CoA + H(+). It carries out the reaction propanoyl-CoA + H2O = propanoate + CoA + H(+). The catalysed reaction is hexadecanoyl-CoA + H2O = hexadecanoate + CoA + H(+). It catalyses the reaction octanoyl-CoA + H2O = octanoate + CoA + H(+). The enzyme catalyses decanoyl-CoA + H2O = decanoate + CoA + H(+). It carries out the reaction tetradecanoyl-CoA + H2O = tetradecanoate + CoA + H(+). The catalysed reaction is 4,8-dimethylnonanoyl-CoA + H2O = 4,8-dimethylnonanoate + CoA + H(+). It catalyses the reaction 3-methylbutanoyl-CoA + H2O = 3-methylbutanoate + CoA + H(+). The enzyme catalyses 2-methylpropanoyl-CoA + H2O = 2-methylpropanoate + CoA + H(+). The protein operates within lipid metabolism; fatty acid metabolism. Strongly inhibited by NADH and CoA. Functionally, mitochondrial acyl-CoA thioesterase. Catalyzes the hydrolysis of acyl-CoAs into free fatty acids and coenzyme A (CoA), regulating their respective intracellular levels. Shows a clear preference for hydrophobic short-, medium-, and long-chain saturated acyl-CoAs with some activity also with short-chain dicarboxylic CoA esters. Regulates both mitochondrial lipid and amino acid metabolism. The polypeptide is Acyl-coenzyme A thioesterase 9, mitochondrial (Acot9) (Mus musculus (Mouse)).